The chain runs to 378 residues: Succinyl-diaminopimelate desuccinylase (378 aa).

His67 lines the Zn(2+) pocket. Residue Asp69 is part of the active site. Asp100 contacts Zn(2+). The active-site Proton acceptor is Glu134. Residues Glu135, Glu163, and His349 each contribute to the Zn(2+) site.

Belongs to the peptidase M20A family. DapE subfamily. In terms of assembly, homodimer. Zn(2+) serves as cofactor. The cofactor is Co(2+).

It carries out the reaction N-succinyl-(2S,6S)-2,6-diaminopimelate + H2O = (2S,6S)-2,6-diaminopimelate + succinate. It participates in amino-acid biosynthesis; L-lysine biosynthesis via DAP pathway; LL-2,6-diaminopimelate from (S)-tetrahydrodipicolinate (succinylase route): step 3/3. In terms of biological role, catalyzes the hydrolysis of N-succinyl-L,L-diaminopimelic acid (SDAP), forming succinate and LL-2,6-diaminopimelate (DAP), an intermediate involved in the bacterial biosynthesis of lysine and meso-diaminopimelic acid, an essential component of bacterial cell walls. The chain is Succinyl-diaminopimelate desuccinylase from Nitrosomonas eutropha (strain DSM 101675 / C91 / Nm57).